The primary structure comprises 167 residues: Sporulation membrane protein YtrI (167 aa).

A helical transmembrane segment spans residues 15 to 35 (FFAGMMCGAVISWFFFLFTYG).

It is found in the cell membrane. Involved in sporulation. The chain is Sporulation membrane protein YtrI (ytrI) from Bacillus subtilis (strain 168).